Consider the following 219-residue polypeptide: Phosphatidylserine decarboxylase proenzyme (219 aa).

Serine 188 (schiff-base intermediate with substrate; via pyruvic acid) is an active-site residue. The residue at position 188 (serine 188) is a Pyruvic acid (Ser); by autocatalysis.

The protein belongs to the phosphatidylserine decarboxylase family. PSD-A subfamily. Heterodimer of a large membrane-associated beta subunit and a small pyruvoyl-containing alpha subunit. Pyruvate serves as cofactor. In terms of processing, is synthesized initially as an inactive proenzyme. Formation of the active enzyme involves a self-maturation process in which the active site pyruvoyl group is generated from an internal serine residue via an autocatalytic post-translational modification. Two non-identical subunits are generated from the proenzyme in this reaction, and the pyruvate is formed at the N-terminus of the alpha chain, which is derived from the carboxyl end of the proenzyme. The post-translation cleavage follows an unusual pathway, termed non-hydrolytic serinolysis, in which the side chain hydroxyl group of the serine supplies its oxygen atom to form the C-terminus of the beta chain, while the remainder of the serine residue undergoes an oxidative deamination to produce ammonia and the pyruvoyl prosthetic group on the alpha chain.

The protein localises to the cell membrane. It catalyses the reaction a 1,2-diacyl-sn-glycero-3-phospho-L-serine + H(+) = a 1,2-diacyl-sn-glycero-3-phosphoethanolamine + CO2. It functions in the pathway phospholipid metabolism; phosphatidylethanolamine biosynthesis; phosphatidylethanolamine from CDP-diacylglycerol: step 2/2. Its function is as follows. Catalyzes the formation of phosphatidylethanolamine (PtdEtn) from phosphatidylserine (PtdSer). This is Phosphatidylserine decarboxylase proenzyme from Geobacter sp. (strain M21).